Reading from the N-terminus, the 195-residue chain is MTTIQPFEPVDLFKTNNVNLDILTENFPLEFYFEYMIIWPDLFFKSSEMTVDPTFKHNISGYMMAKTEGKTTEWHTHITAVTVAPRFRRISLASKLCNTLETMTDVMPHEVNFIDLFVKCNNQLAIKLYEKLGYSVYRRVVGYYNSAEDGYPDTLKKVDDNKDAFDMRKAMARDRNRSVRPDGRSHKCYPHDVRF.

One can recognise an N-acetyltransferase domain in the interval 2 to 172 (TTIQPFEPVD…DAFDMRKAMA (171 aa)).

Belongs to the acetyltransferase family. GNAT subfamily. Component of the N-terminal acetyltransferase B (NatB) complex, which is composed of NAT3 and MDM20.

It is found in the cytoplasm. It carries out the reaction N-terminal L-methionyl-L-asparaginyl-[protein] + acetyl-CoA = N-terminal N(alpha)-acetyl-L-methionyl-L-asparaginyl-[protein] + CoA + H(+). The catalysed reaction is N-terminal L-methionyl-L-glutaminyl-[protein] + acetyl-CoA = N-terminal N(alpha)-acetyl-L-methionyl-L-glutaminyl-[protein] + CoA + H(+). The enzyme catalyses N-terminal L-methionyl-L-aspartyl-[protein] + acetyl-CoA = N-terminal N(alpha)-acetyl-L-methionyl-L-aspartyl-[protein] + CoA + H(+). It catalyses the reaction N-terminal L-methionyl-L-glutamyl-[protein] + acetyl-CoA = N-terminal N(alpha)-acetyl-L-methionyl-L-glutamyl-[protein] + CoA + H(+). Catalytic subunit of the NatB N-terminal acetyltransferase, which catalyzes acetylation of the amino-terminal methionine residues of all proteins beginning with Met-Asp or Met-Glu and of some proteins beginning with Met-Asn, Met-Gln or Met-Met. NatB acetylates TPM1 protein and regulates tropomyocin-actin interactions, it is presumed to N-acetylate 15% of all yeast proteins. The protein is N-terminal acetyltransferase B complex catalytic subunit NAT3 of Saccharomyces cerevisiae (strain ATCC 204508 / S288c) (Baker's yeast).